The primary structure comprises 225 residues: Uracil-DNA glycosylase (225 aa).

The active-site Proton acceptor is Asp-64.

This sequence belongs to the uracil-DNA glycosylase (UDG) superfamily. UNG family.

The protein localises to the cytoplasm. The enzyme catalyses Hydrolyzes single-stranded DNA or mismatched double-stranded DNA and polynucleotides, releasing free uracil.. In terms of biological role, excises uracil residues from the DNA which can arise as a result of misincorporation of dUMP residues by DNA polymerase or due to deamination of cytosine. The polypeptide is Uracil-DNA glycosylase (Lachnoclostridium phytofermentans (strain ATCC 700394 / DSM 18823 / ISDg) (Clostridium phytofermentans)).